The sequence spans 298 residues: Probable endonuclease 4 (298 aa).

Histidine 69, histidine 111, glutamate 146, aspartate 180, histidine 183, histidine 215, aspartate 228, histidine 230, and glutamate 260 together coordinate Zn(2+).

It belongs to the AP endonuclease 2 family. It depends on Zn(2+) as a cofactor.

The catalysed reaction is Endonucleolytic cleavage to 5'-phosphooligonucleotide end-products.. Its function is as follows. Endonuclease IV plays a role in DNA repair. It cleaves phosphodiester bonds at apurinic or apyrimidinic (AP) sites, generating a 3'-hydroxyl group and a 5'-terminal sugar phosphate. The polypeptide is Probable endonuclease 4 (Bacillus cereus (strain B4264)).